The following is a 159-amino-acid chain: Phosphopantetheine adenylyltransferase (159 aa).

Residue Thr9 coordinates substrate. ATP contacts are provided by residues Thr9–Phe10 and His17. Residues Lys41, Leu73, and Arg87 each contribute to the substrate site. ATP is bound by residues Gly88 to Arg90, Glu98, and Tyr123 to Thr129.

Belongs to the bacterial CoaD family. As to quaternary structure, homohexamer. Requires Mg(2+) as cofactor.

The protein localises to the cytoplasm. It carries out the reaction (R)-4'-phosphopantetheine + ATP + H(+) = 3'-dephospho-CoA + diphosphate. It participates in cofactor biosynthesis; coenzyme A biosynthesis; CoA from (R)-pantothenate: step 4/5. Functionally, reversibly transfers an adenylyl group from ATP to 4'-phosphopantetheine, yielding dephospho-CoA (dPCoA) and pyrophosphate. This is Phosphopantetheine adenylyltransferase from Pseudomonas aeruginosa (strain LESB58).